Reading from the N-terminus, the 956-residue chain is Transient receptor potential channel pyrexia (956 aa).

Over 1–491 the chain is Cytoplasmic; that stretch reads MENVRFSIIE…LFLKWRRIRK (491 aa). ANK repeat units lie at residues 132-161, 166-195, 198-227, 231-260, 265-294, 298-327, 331-362, and 366-395; these read RGRTPLHFACCRANAPIAKVLLDFGADPNR, KEVTSLHCAASSKSVECILLLLRRKASINI, EKRSALHYAIDVNAVDCVEILLKYGADPNT, YTETPLHTASAAGFAKCVQLLLSHNADVRS, GKVTALHLAAENDYVECARLLLEHRAEVDC, SHQTPLHLACLSQSIGTVDLLISYGANVNA, DGRTALHAAIVKQSRSLDCCNALLKAGADVNK, and YGYTPLHIAALNEFSSCVYTFIEHGADITA. The helical transmembrane segment at 492 to 512 threads the bilayer; the sequence is FFLMSLAYHTLFVILFTFYVI. At 513–525 the chain is on the extracellular side; the sequence is WVYVRCCKKEELC. The chain crosses the membrane as a helical span at residues 526 to 546; that stretch reads VAPGYVSTIGYLVIILNLILL. Residues 547-565 lie on the Cytoplasmic side of the membrane; the sequence is GKEVFQMAHGLRGYAKYWE. The chain crosses the membrane as a helical span at residues 566–584; that stretch reads NWLQWTIGTGVLLCVTPET. The Extracellular segment spans residues 585 to 601; that stretch reads VRTDDLTAVPVWQHHVA. Residues 602 to 622 traverse the membrane as a helical segment; the sequence is AIVILLVWLELMMLVGRFPIF. Residues 623–638 are Cytoplasmic-facing; the sequence is GVYVQMFTKVAVNFAK. A helical transmembrane segment spans residues 639 to 659; the sequence is FLLAYICLLVAFGLSFAVLFN. Topologically, residues 660 to 701 are extracellular; it reads DYPAFENITWSFLKSITMMSGELEFEDIFYGDYAVKFPVTAH. Asn-666 carries an N-linked (GlcNAc...) asparagine glycan. A helical membrane pass occupies residues 702 to 722; it reads IIFLSFVLLVTVILTNLMVGL. The Cytoplasmic portion of the chain corresponds to 723 to 956; it reads AVSDIQGLQV…VASSHIRRHR (234 aa).

The protein belongs to the transient receptor (TC 1.A.4) family. STrpC subfamily. As to quaternary structure, homooligomer; between isoform A and isoform B. As to expression, expressed in various peripheral nerves and the central nerves in embryos. In adults, it is expressed in sensory neurons lying beneath the bristles around eyes, neurons innervating the bristles on the back of thorax and neurons in maxillary palps, proboscis and antennae. Expressed in multidendritic neurons, which mediate temperature sensing, as well as non-multidendritic neurons in larval epidermis. Localizes ubiquitously throughout neurites.

The protein localises to the membrane. Its function is as follows. Receptor-activated non-selective cation channel involved in protection or tolerance from high temperature stress. Activated by temperatures above 40 degrees Celsius. More permeable to K(+) than to Na(+). May act in stress protection allow flies to survive in natural environments. This is Transient receptor potential channel pyrexia (pyx) from Drosophila melanogaster (Fruit fly).